The sequence spans 219 residues: Pollen-specific protein SF3 (219 aa).

LIM zinc-binding domains follow at residues 9 to 109 and 110 to 167; these read QKCT…TRDK and CNAC…QLFK. The segment at 181-219 is disordered; it reads VAAPAESETQNTETQNAETQNADTQNADTQNTETQNGSV. The span at 185–202 shows a compositional bias: low complexity; the sequence is AESETQNTETQNAETQNA. Residues 203 to 219 are compositionally biased toward polar residues; that stretch reads DTQNADTQNTETQNGSV.

In terms of tissue distribution, pollen.

Its function is as follows. Could possibly involved in controlling pollen-specific processes such as male gamete maturation, pollen tube formation, or even fertilization. This chain is Pollen-specific protein SF3 (SF3), found in Helianthus annuus (Common sunflower).